Reading from the N-terminus, the 186-residue chain is Lipoprotein signal peptidase (186 aa).

The next 3 helical transmembrane spans lie at 11–31 (WIPL…KLLV), 44–64 (VLGD…FSIG), and 70–90 (VLRT…IVFS). Catalysis depends on residues Asp-128 and Asp-150. The chain crosses the membrane as a helical span at residues 145–165 (AFNIADAVIMTCGLLLIISFI).

It belongs to the peptidase A8 family.

It is found in the cell inner membrane. The enzyme catalyses Release of signal peptides from bacterial membrane prolipoproteins. Hydrolyzes -Xaa-Yaa-Zaa-|-(S,diacylglyceryl)Cys-, in which Xaa is hydrophobic (preferably Leu), and Yaa (Ala or Ser) and Zaa (Gly or Ala) have small, neutral side chains.. It participates in protein modification; lipoprotein biosynthesis (signal peptide cleavage). Functionally, this protein specifically catalyzes the removal of signal peptides from prolipoproteins. The chain is Lipoprotein signal peptidase from Treponema pallidum (strain Nichols).